A 262-amino-acid polypeptide reads, in one-letter code: Tropinone reductase homolog At2g29310 (262 aa).

Position 13 to 37 (13 to 37 (LVTGAASGIGYAIVEELASFGAIIH)) interacts with NADP(+). Residue Ser146 coordinates substrate. Tyr159 functions as the Proton acceptor in the catalytic mechanism.

This sequence belongs to the short-chain dehydrogenases/reductases (SDR) family. SDR65C subfamily.

The chain is Tropinone reductase homolog At2g29310 from Arabidopsis thaliana (Mouse-ear cress).